Consider the following 377-residue polypeptide: Interferon gamma receptor 1 (377 aa).

A signal peptide spans 1 to 23 (MRTQIYISVTVLILLLKKSDLEA). The Extracellular portion of the chain corresponds to 24–235 (VRVPSPESVS…IRRYTPFTVY (212 aa)). One can recognise a Fibronectin type-III domain in the interval 26–117 (VPSPESVSVQ…DFFIFSFNEN (92 aa)). N-linked (GlcNAc...) asparagine glycans are attached at residues Asn-78 and Asn-186. A helical membrane pass occupies residues 236-256 (LYPVLGVTLTLLFITGIIILL). Residues 257–377 (EKKCNSEMKK…TVDSYGPRLL (121 aa)) lie on the Cytoplasmic side of the membrane. The tract at residues 326–377 (VYSEDKNSYGPNDLVEDEQSDLSDFYDCPHAPKQKREMSPGDTVDSYGPRLL) is disordered.

Belongs to the type II cytokine receptor family. In terms of tissue distribution, highly expressed in spleen. Also detected in brain, kidney, gill, intestine and heart. Expressed at very low levels in muscle. In immune cell populations, shows highest expression in monocytes, and slightly lower expression in peripheral blood leukocytes, splenocytes, neutrophils and mature macrophages.

It is found in the cell membrane. In terms of biological role, receptor which shows binding specificity for the cytokine ifng1r (interferon gamma-related). The sequence is that of Interferon gamma receptor 1 from Carassius auratus (Goldfish).